A 251-amino-acid polypeptide reads, in one-letter code: Ubiquinone/menaquinone biosynthesis C-methyltransferase UbiE (251 aa).

S-adenosyl-L-methionine contacts are provided by residues Thr74, Asp95, and 123-124; that span reads NA.

This sequence belongs to the class I-like SAM-binding methyltransferase superfamily. MenG/UbiE family.

It catalyses the reaction a 2-demethylmenaquinol + S-adenosyl-L-methionine = a menaquinol + S-adenosyl-L-homocysteine + H(+). The enzyme catalyses a 2-methoxy-6-(all-trans-polyprenyl)benzene-1,4-diol + S-adenosyl-L-methionine = a 5-methoxy-2-methyl-3-(all-trans-polyprenyl)benzene-1,4-diol + S-adenosyl-L-homocysteine + H(+). Its pathway is quinol/quinone metabolism; menaquinone biosynthesis; menaquinol from 1,4-dihydroxy-2-naphthoate: step 2/2. It participates in cofactor biosynthesis; ubiquinone biosynthesis. Functionally, methyltransferase required for the conversion of demethylmenaquinol (DMKH2) to menaquinol (MKH2) and the conversion of 2-polyprenyl-6-methoxy-1,4-benzoquinol (DDMQH2) to 2-polyprenyl-3-methyl-6-methoxy-1,4-benzoquinol (DMQH2). The sequence is that of Ubiquinone/menaquinone biosynthesis C-methyltransferase UbiE from Pseudoalteromonas translucida (strain TAC 125).